The chain runs to 262 residues: Snake venom serine proteinase 1 (262 aa).

Positions 1–18 (MVLIRVLANLLILQLSYA) are cleaved as a signal peptide. The propeptide occupies 19-24 (QKSSEL). The 229-residue stretch at 25–253 (VIGGDECNIN…HLDWIQSIIA (229 aa)) folds into the Peptidase S1 domain. 5 disulfides stabilise this stretch: Cys-31-Cys-165, Cys-52-Cys-68, Cys-144-Cys-214, Cys-176-Cys-193, and Cys-204-Cys-229. His-67 functions as the Charge relay system in the catalytic mechanism. N-linked (GlcNAc...) asparagine glycosylation is present at Asn-105. The active-site Charge relay system is the Asp-112. The active-site Charge relay system is the Ser-208.

This sequence belongs to the peptidase S1 family. Snake venom subfamily. In terms of assembly, monomer. Expressed by the venom gland.

The protein localises to the secreted. Functionally, snake venom serine protease that may act in the hemostasis system of the prey. The polypeptide is Snake venom serine proteinase 1 (Crotalus adamanteus (Eastern diamondback rattlesnake)).